An 85-amino-acid polypeptide reads, in one-letter code: Large ribosomal subunit protein bL27 (85 aa).

Residues 1-21 (MAHKKGGGSTHNGRDSKPKML) are disordered.

It belongs to the bacterial ribosomal protein bL27 family.

The polypeptide is Large ribosomal subunit protein bL27 (Albidiferax ferrireducens (strain ATCC BAA-621 / DSM 15236 / T118) (Rhodoferax ferrireducens)).